We begin with the raw amino-acid sequence, 57 residues long: Mambaquaretin-2 (57 aa).

One can recognise a BPTI/Kunitz inhibitor domain in the interval 5–55; it reads CNLPVKPGPCNGFFSAFYYSQKTNKCHSFTYGGCRGNANRFSTIEECRRTC. Cystine bridges form between Cys5-Cys55, Cys14-Cys38, and Cys30-Cys51.

The protein belongs to the venom Kunitz-type family. In terms of tissue distribution, expressed by the venom gland.

The protein localises to the secreted. Functionally, interacts with vasopressin V2 receptor (V2R/AVPR2), probably in a selective manner. Inhibits vasopressin binding human V2R in the nanomolar range (Ki=8.16 nM), and also moderately inhibits vasopressin-induced cAMP production (IC(50)=224 nM). In vivo, intraperitoneal injection of this protein into rats increases diuresis by 5.5-fold, without any loss of electrolytes. The sequence is that of Mambaquaretin-2 from Dendroaspis viridis (Western green mamba).